A 493-amino-acid chain; its full sequence is Probable malate:quinone oxidoreductase (493 aa).

The protein belongs to the MQO family. FAD is required as a cofactor.

The catalysed reaction is (S)-malate + a quinone = a quinol + oxaloacetate. The protein operates within carbohydrate metabolism; tricarboxylic acid cycle; oxaloacetate from (S)-malate (quinone route): step 1/1. This Lysinibacillus sphaericus (strain C3-41) protein is Probable malate:quinone oxidoreductase.